The primary structure comprises 471 residues: Tigger transposable element-derived protein 3 (471 aa).

The HTH psq-type domain occupies 3–55; that stretch reads LSSKKKLHALSLAEKIQVLELLDESKMSQSEVARRFQVSQPQISRICKNKEKL. 2 DNA-binding regions (H-T-H motif) span residues 31 to 51 and 100 to 130; these read QSEV…ICKN and PMLL…WKRR. The 71-residue stretch at 67-137 folds into the HTH CENPB-type domain; it reads ERKRKRESKY…KRRNNVGFGA (71 aa). The DDE-1 domain maps to 167–360; the sequence is FSPEDVFGCA…VPPQLIFSSF (194 aa).

The protein belongs to the tigger transposable element derived protein family.

The protein localises to the nucleus. The polypeptide is Tigger transposable element-derived protein 3 (TIGD3) (Homo sapiens (Human)).